We begin with the raw amino-acid sequence, 734 residues long: Cullin-4 (734 aa).

The region spanning 666–728 (DRQFELQASI…KEYLEREDND (63 aa)) is the Cullin neddylation domain. Residue Lys680 forms a Glycyl lysine isopeptide (Lys-Gly) (interchain with G-Cter in NEDD8) linkage.

Belongs to the cullin family. As to quaternary structure, component of the Clr4 methyltransferase complex (ClrC) composed of at least clr4, rik1, pcu4, rbx1, raf1 and raf2. The cullin pcu4, rik1, raf1, raf2 and the ring-box protein rbx1 are components of an E3 ubiquitin ligase, whose activity is essential for heterochromatin assembly. Neddylated; enhancing the ubiquitin-ligase activity.

It is found in the cytoplasm. Its subcellular location is the nucleus. The protein resides in the chromosome. Its pathway is protein modification; protein ubiquitination. Functionally, required, indirectly, for activation of ribonucleotide reductase through the degradation of the protein spd1, thereby supplying deoxyribonucleotides for DNA replication and repair. Also has a role as a scaffold for assembling ubiquitin ligases. Component of the Clr4 methyltransferase complex (ClrC) which contributes to the establishment of heterochromatin by specifically methylating histone H3 to form H3K9me. ClrC preferentially ubiquitylates H3K14 and ClrC-mediated H3 ubiquitination promotes clr4 methyltransferase activity for the methylation of H3K9. H3K9me represents a specific tag for epigenetic transcriptional repression by recruiting swi6/HP1 to methylated histones which leads to transcriptional silencing within centromeric heterochromatin, telomeric regions and at the silent mating-type loci. This is Cullin-4 (pcu4) from Schizosaccharomyces pombe (strain 972 / ATCC 24843) (Fission yeast).